We begin with the raw amino-acid sequence, 522 residues long: Exo-alpha-(1-&gt;6)-L-arabinofuranosidase (522 aa).

Residues Glu-39, Asn-84, and Asn-185 each coordinate alpha-L-arabinofuranose. Glu-186 functions as the Proton donor/acceptor in the catalytic mechanism. Alpha-L-arabinofuranose-binding residues include Tyr-257, Glu-310, and Gln-370. The Nucleophile role is filled by Glu-310.

Belongs to the glycosyl hydrolase 51 family. In terms of assembly, homohexamer; trimer of dimers.

It carries out the reaction Hydrolysis of terminal non-reducing alpha-L-arabinofuranoside residues in alpha-L-arabinosides.. The enzyme catalyses (20S)-ginsenoside Rc + H2O = L-arabinofuranose + (20S)-ginsenoside Rd. Completely inhibited by Cu(2+) and partially inhibited by Co(2+) and Ba(2+). In terms of biological role, catalyzes the hydrolysis of p-nitrophenyl-alpha-L-arabinofuranoside (pNP-alphaL-Af) and the hydrolysis of the terminal alpha-L-arabinofuranoside at the C20 position of ginsenoside Rc to produce ginsenoside Rd. Cannot hydrolyze p-nitrophenyl-alpha-L-arabinopyranoside (pNP-alphaL-Ap) and ginsenoside Rb2. This chain is Exo-alpha-(1-&gt;6)-L-arabinofuranosidase, found in Bifidobacterium longum.